A 912-amino-acid chain; its full sequence is Coiled-coil domain-containing protein 162 (912 aa).

2 coiled-coil regions span residues 1 to 35 (MFKS…FSFA) and 220 to 276 (VLLG…VVMS).

The polypeptide is Coiled-coil domain-containing protein 162 (Mus musculus (Mouse)).